Here is a 147-residue protein sequence, read N- to C-terminus: Hemoglobin subunit beta (147 aa).

Valine 2 is modified (N-acetylvaline). The 145-residue stretch at 3-147 (HLTGEEKSAV…VANALAHKYH (145 aa)) folds into the Globin domain. The residue at position 13 (threonine 13) is a Phosphothreonine. Residue serine 45 is modified to Phosphoserine. Lysine 60 is subject to N6-acetyllysine. Histidine 64 provides a ligand contact to heme b. An N6-acetyllysine modification is found at lysine 83. Position 93 (histidine 93) interacts with heme b. At cysteine 94 the chain carries S-nitrosocysteine. Position 145 is an N6-acetyllysine (lysine 145).

Belongs to the globin family. In terms of assembly, heterotetramer of two alpha chains and two beta chains. As to expression, red blood cells.

Its function is as follows. Involved in oxygen transport from the lung to the various peripheral tissues. The protein is Hemoglobin subunit beta (HBB) of Callithrix jacchus (White-tufted-ear marmoset).